Here is a 564-residue protein sequence, read N- to C-terminus: Pyruvate decarboxylase (564 aa).

Positions 28 and 115 each coordinate pyruvate. Residues Thr390 and 413–415 contribute to the thiamine diphosphate site; that span reads GSI. Residue Asp444 participates in Mg(2+) binding. Residues 445–446 and 471–476 contribute to the thiamine diphosphate site; these read GS and NNGYTI. 2 residues coordinate Mg(2+): Asn471 and Gly473. A pyruvate-binding site is contributed by Glu477.

It belongs to the TPP enzyme family. In terms of assembly, homotetramer. Mg(2+) is required as a cofactor. It depends on thiamine diphosphate as a cofactor.

It carries out the reaction a 2-oxocarboxylate + H(+) = an aldehyde + CO2. The catalysed reaction is pyruvate + H(+) = acetaldehyde + CO2. This Hanseniaspora uvarum (Yeast) protein is Pyruvate decarboxylase (PDC).